Reading from the N-terminus, the 274-residue chain is Large ribosomal subunit protein uL2 (274 aa).

2 disordered regions span residues 28 to 55 (APHA…RHVG) and 224 to 274 (VAMN…RRRK). The segment covering 263–274 (KRTDKMIVRRRK) has biased composition (basic and acidic residues).

The protein belongs to the universal ribosomal protein uL2 family. In terms of assembly, part of the 50S ribosomal subunit. Forms a bridge to the 30S subunit in the 70S ribosome.

One of the primary rRNA binding proteins. Required for association of the 30S and 50S subunits to form the 70S ribosome, for tRNA binding and peptide bond formation. It has been suggested to have peptidyltransferase activity; this is somewhat controversial. Makes several contacts with the 16S rRNA in the 70S ribosome. The sequence is that of Large ribosomal subunit protein uL2 from Pseudomonas fluorescens (strain ATCC BAA-477 / NRRL B-23932 / Pf-5).